We begin with the raw amino-acid sequence, 741 residues long: Prestin (741 aa).

Topologically, residues 1-79 are cytoplasmic; the sequence is MDHVEETEIL…WLPAYRFKEY (79 aa). A helical membrane pass occupies residues 80 to 105; that stretch reads VLGDIVSGISTGVLQLPQGLAFAMLA. Residues 106–109 lie on the Extracellular side of the membrane; it reads AVPP. Residues 110–125 traverse the membrane as a helical segment; it reads VFGLYSSFYPVIMYCF. The Cytoplasmic segment spans residues 126 to 137; sequence FGTSRHISIGPF. The helical transmembrane segment at 138 to 147 threads the bilayer; that stretch reads AVISLMIGGV. Topologically, residues 148–178 are extracellular; that stretch reads AVRLVPDDIVIPGGVNATNSTEARDALRVKV. Positions 158–168 match the Involved in motor function motif; that stretch reads IPGGVNATNST. N-linked (GlcNAc...) asparagine glycans are attached at residues asparagine 163 and asparagine 166. The next 2 helical transmembrane spans lie at 179–208 and 209–230; these read AMSV…LTEP and LVRG…KYLF. Over 231 to 243 the chain is Extracellular; sequence GVKTKRYSGIFSV. Residues 244 to 248 constitute an intramembrane region (helical); that stretch reads VYSTV. The Extracellular segment spans residues 249 to 261; that stretch reads AVLQNVKNLNVCS. The helical transmembrane segment at 262-283 threads the bilayer; it reads LGVGLMVFGLLLGGKEFNERFK. Residues 284 to 291 are Cytoplasmic-facing; that stretch reads EKLPAPIP. A helical membrane pass occupies residues 292–303; sequence LEFFAVVMGTGI. Residues 304-338 lie on the Extracellular side of the membrane; it reads SAGFSLHESYNVDVVGTLPLGLLPPANPDTSLFHL. A helical membrane pass occupies residues 339-361; the sequence is VYVDAIAIAIVGFSVTISMAKTL. Topologically, residues 362 to 370 are cytoplasmic; that stretch reads ANKHGYQVD. The helical transmembrane segment at 371–388 threads the bilayer; the sequence is GNQELIALGLCNSTGSLF. Residues 389–396 are Extracellular-facing; that stretch reads QTFAISCS. A helical transmembrane segment spans residues 397 to 406; sequence LSRSLVQEGT. A salicylate-binding site is contributed by serine 398. Residues 407–410 are Cytoplasmic-facing; sequence GGKT. A helical transmembrane segment spans residues 411–429; the sequence is QLAGCLASLMILLVILATG. The Extracellular portion of the chain corresponds to 430–436; it reads FLFESLP. A helical transmembrane segment spans residues 437–459; the sequence is QAVLSAIVIVNLKGMFMQFSDLP. At 460–467 the chain is on the cytoplasmic side; that stretch reads FFWRTSKI. A helical transmembrane segment spans residues 468–483; the sequence is ELTIWLTTFVSSLFLG. Position 484 (leucine 484) is a topological domain, extracellular. Residues 485–498 form a helical membrane-spanning segment; sequence DYGLITAVIIALMT. Residues 499–741 lie on the Cytoplasmic side of the membrane; it reads VIYRTQSPSY…DSEPNATPEA (243 aa). Residues 505-718 are extended region for STAS domain; sequence SPSYIVLGQL…AVLGSQVREA (214 aa). The STAS domain occupies 525–713; sequence AYEEVKEVPG…HSIHDAVLGS (189 aa). The segment at 718 to 741 is disordered; sequence ALAEQEATAAPPQEDSEPNATPEA. Low complexity predominate over residues 721 to 730; the sequence is EQEATAAPPQ.

This sequence belongs to the SLC26A/SulP transporter (TC 2.A.53) family. Homodimer. Interacts (via STAS domain) with CALM; this interaction is calcium-dependent and the STAS domain interacts with only one lobe of CALM which is an elongated conformation.

Its subcellular location is the cell membrane. It catalyses the reaction 2 hydrogencarbonate(in) + chloride(out) = 2 hydrogencarbonate(out) + chloride(in). Its function is as follows. Voltage-sensitive motor protein that drives outer hair cell (OHC) electromotility (eM) and participates in sound amplification in the hearing organ. Converts changes in the transmembrane electric potential into mechanical displacements resulting in the coupling of its expansion to movement of a charged voltage sensor across the lipid membrane. The nature of the voltage sensor is not completely clear, and two models compete. In the first model, acts as an incomplete transporter where intracellular chloride anion acts as extrinsic voltage sensor that drives conformational change in the protein which is sufficient to produce a length change in the plane of the membrane and hence in the length of the OHC. The second model in which multiple charged amino acid residues are distributed at the intracellular and extracellular membrane interfaces that form an intrinsic voltage sensor, whose movement produces the non-linear capacitance (NLC). However, the effective voltage sensor may be the result of a hybrid voltage sensor assembled from intrinsic charge (charged residues) and extrinsic charge (bound anion). Notably, binding of anions to the anion-binding pocket partially neutralizes the intrinsic positive charge rather than to form an electrically negative sensor, therefore remaining charge may serve as voltage sensor that, after depolarization, moves from down (expanded state) to up (contracted) conformation, which is accompanied by an eccentric contraction of the intermembrane cross-sectional area of the protein as well as a major increase in the hydrophobic thickness of the protein having as consequences the plasma membrane thickening and the cell contraction after membrane depolarization. The anion-binding pocket transits from the inward-open (Down) state, where it is exposed toward the intracellular solvent in the absence of anion, to the occluded (Up) state upon anion binding. Salicylate competes for the anion-binding site and inhibits the voltage-sensor movement, and therefore inhibits the charge transfer and electromotility by displacing Cl(-) from the anion-binding site and by preventing the structural transitions to the contracted state. In addition, can act as a weak Cl(-)/HCO3 (-) antiporter across the cell membrane and so regulate the intracellular pH of the outer hair cells (OHCs), while firstly found as being unable to mediate electrogenic anion transport. Moreover, supports a role in cardiac mechanical amplification serving as an elastic element to enhance the actomyosin- based sarcomere contraction system. The polypeptide is Prestin (Tursiops truncatus (Atlantic bottle-nosed dolphin)).